The primary structure comprises 630 residues: DNA mismatch repair protein MutL (630 aa).

The protein belongs to the DNA mismatch repair MutL/HexB family.

Functionally, this protein is involved in the repair of mismatches in DNA. It is required for dam-dependent methyl-directed DNA mismatch repair. May act as a 'molecular matchmaker', a protein that promotes the formation of a stable complex between two or more DNA-binding proteins in an ATP-dependent manner without itself being part of a final effector complex. The protein is DNA mismatch repair protein MutL of Lactobacillus johnsonii (strain CNCM I-12250 / La1 / NCC 533).